We begin with the raw amino-acid sequence, 777 residues long: Endonuclease MutS2 (777 aa).

328-335 lines the ATP pocket; sequence GPNTGGKT. Residues 702–777 enclose the Smr domain; it reads LDLRGKRYEE…GSGCTIATLG (76 aa).

It belongs to the DNA mismatch repair MutS family. MutS2 subfamily. In terms of assembly, homodimer. Binds to stalled ribosomes, contacting rRNA.

Endonuclease that is involved in the suppression of homologous recombination and thus may have a key role in the control of bacterial genetic diversity. In terms of biological role, acts as a ribosome collision sensor, splitting the ribosome into its 2 subunits. Detects stalled/collided 70S ribosomes which it binds and splits by an ATP-hydrolysis driven conformational change. Acts upstream of the ribosome quality control system (RQC), a ribosome-associated complex that mediates the extraction of incompletely synthesized nascent chains from stalled ribosomes and their subsequent degradation. Probably generates substrates for RQC. This Streptococcus uberis (strain ATCC BAA-854 / 0140J) protein is Endonuclease MutS2.